Here is a 235-residue protein sequence, read N- to C-terminus: Ribonuclease 3 (235 aa).

In terms of domain architecture, RNase III spans 11-137 (RAWCAEALGY…VVGALYLDGG (127 aa)). Residue Glu51 coordinates Mg(2+). The active site involves Asp55. Asp123 and Glu126 together coordinate Mg(2+). Glu126 is a catalytic residue. Positions 164-233 (DYKTQLQEQL…ARQALMPEHH (70 aa)) constitute a DRBM domain.

Belongs to the ribonuclease III family. As to quaternary structure, homodimer. Mg(2+) is required as a cofactor.

The protein localises to the cytoplasm. It carries out the reaction Endonucleolytic cleavage to 5'-phosphomonoester.. In terms of biological role, digests double-stranded RNA. Involved in the processing of primary rRNA transcript to yield the immediate precursors to the large and small rRNAs (23S and 16S). Processes some mRNAs, and tRNAs when they are encoded in the rRNA operon. Processes pre-crRNA and tracrRNA of type II CRISPR loci if present in the organism. This Symbiobacterium thermophilum (strain DSM 24528 / JCM 14929 / IAM 14863 / T) protein is Ribonuclease 3.